A 323-amino-acid chain; its full sequence is uncharacterized protein (323 aa).

Residues 4-24 (IIFAFIILFVFLLPMIIFYQP) traverse the membrane as a helical segment.

It is found in the membrane. This is an uncharacterized protein from Escherichia coli (strain K12).